The chain runs to 320 residues: Ferrochelatase (320 aa).

Fe cation contacts are provided by His-194 and Glu-275.

Belongs to the ferrochelatase family. In terms of assembly, monomer.

The protein resides in the cytoplasm. The enzyme catalyses heme b + 2 H(+) = protoporphyrin IX + Fe(2+). Its pathway is porphyrin-containing compound metabolism; protoheme biosynthesis; protoheme from protoporphyrin-IX: step 1/1. Functionally, catalyzes the ferrous insertion into protoporphyrin IX. The polypeptide is Ferrochelatase (Escherichia coli O127:H6 (strain E2348/69 / EPEC)).